Consider the following 143-residue polypeptide: Papain inhibitor (143 aa).

A signal peptide spans 1-33 (MREFRRVRRVRFAACALVAAATGITLAAGPASA).

In terms of assembly, monomer.

It is found in the secreted. In terms of biological role, stress protein produced under hyperthermal stress conditions. Serves as a glutamine and lysine donor substrate for transglutaminase. Inhibits the cysteine proteases papain and bromelain as well as the bovine serine protease trypsin. Has hardly any or no effect on subtilisin, bovine chymotrypsin, proteinase K from T.album, transglutaminase-activating metalloproteinase (TAMEP) from S.mobaraensis, dispase from B.polymyxa, thermolysin from B.thermoproteolyticus or collagenase from C.histolyticum. In Streptomyces mobaraensis (Streptoverticillium mobaraense), this protein is Papain inhibitor (pi).